Here is a 272-residue protein sequence, read N- to C-terminus: CD40 ligand (272 aa).

Residues 1-23 (MNEAYSPAAPRPMGSTSPSTMKM) lie on the Cytoplasmic side of the membrane. The chain crosses the membrane as a helical; Signal-anchor for type II membrane protein span at residues 24–44 (FMCFLSVFMVVQTIGTVLFCL). Over 45–272 (YLHMKMDKME…GNTYFGMFKL (228 aa)) the chain is Extracellular. 2 N-linked (GlcNAc...) asparagine glycosylation sites follow: Asn124 and Asn146. The THD domain maps to 136–272 (IATHLAGVKS…GNTYFGMFKL (137 aa)). Cys190 and Cys229 are disulfide-bonded. An N-linked (GlcNAc...) asparagine glycan is attached at Asn251.

The protein belongs to the tumor necrosis factor family. In terms of assembly, homotrimer. Interacts with CD28. CD40 ligand, soluble form: Exists as either a monomer or a homotrimer. Forms a ternary complex between CD40 and integrins for CD40-CD40LG signaling. Post-translationally, the soluble form derives from the membrane form by proteolytic processing.

The protein localises to the cell membrane. It localises to the cell surface. Its subcellular location is the secreted. Cytokine that acts as a ligand to CD40/TNFRSF5. Costimulates T-cell proliferation and cytokine production. Induces the activation of NF-kappa-B. Mediates B-cell proliferation in the absence of co-stimulus as well as IgE production in the presence of IL4. Involved in immunoglobulin class switching. In terms of biological role, acts as a ligand for integrins, specifically ITGA5:ITGB1 and ITGAV:ITGB3; both integrins and the CD40 receptor are required for activation of CD40-CD40LG signaling, which have cell-type dependent effects, such as B-cell activation, NF-kappa-B signaling and anti-apoptotic signaling. In Gallus gallus (Chicken), this protein is CD40 ligand (CD40LG).